The primary structure comprises 478 residues: Aspartyl/glutamyl-tRNA(Asn/Gln) amidotransferase subunit B 2 (478 aa).

It belongs to the GatB/GatE family. GatB subfamily. As to quaternary structure, heterotrimer of A, B and C subunits.

The catalysed reaction is L-glutamyl-tRNA(Gln) + L-glutamine + ATP + H2O = L-glutaminyl-tRNA(Gln) + L-glutamate + ADP + phosphate + H(+). It catalyses the reaction L-aspartyl-tRNA(Asn) + L-glutamine + ATP + H2O = L-asparaginyl-tRNA(Asn) + L-glutamate + ADP + phosphate + 2 H(+). Allows the formation of correctly charged Asn-tRNA(Asn) or Gln-tRNA(Gln) through the transamidation of misacylated Asp-tRNA(Asn) or Glu-tRNA(Gln) in organisms which lack either or both of asparaginyl-tRNA or glutaminyl-tRNA synthetases. The reaction takes place in the presence of glutamine and ATP through an activated phospho-Asp-tRNA(Asn) or phospho-Glu-tRNA(Gln). In Clostridium acetobutylicum (strain ATCC 824 / DSM 792 / JCM 1419 / IAM 19013 / LMG 5710 / NBRC 13948 / NRRL B-527 / VKM B-1787 / 2291 / W), this protein is Aspartyl/glutamyl-tRNA(Asn/Gln) amidotransferase subunit B 2 (gatB2).